Here is a 325-residue protein sequence, read N- to C-terminus: Hydroxymethylglutaryl-CoA lyase, mitochondrial (325 aa).

The transit peptide at 1–27 (MATVRKAFPQRLVGLASLRAASTSSMG) directs the protein to the mitochondrion. The Pyruvate carboxyltransferase domain maps to 33–300 (VKIVEVGPRD…HTGVNLQKLL (268 aa)). Position 41 (Arg-41) interacts with substrate. Residue Asp-42 participates in a divalent metal cation binding. Lys-48 is modified (N6-acetyllysine; alternate). Lys-48 is subject to N6-succinyllysine; alternate. At Lys-111 the chain carries N6-acetyllysine. Residues Lys-137 and Lys-179 each carry the N6-acetyllysine; alternate modification. N6-succinyllysine; alternate is present on residues Lys-137 and Lys-179. A divalent metal cation contacts are provided by His-233 and His-235. Residue Cys-266 is part of the active site. Asn-275 provides a ligand contact to a divalent metal cation. Positions 323–325 (CKL) match the Microbody targeting signal motif. Position 324 is an N6-acetyllysine (Lys-324).

This sequence belongs to the HMG-CoA lyase family. In terms of assembly, homodimer; disulfide-linked. Can also form homotetramers. In suckling rat, highest levels in liver and in intestine. Lower levels in heart, kidney and cerebellum. Weak expression in brain cortex, medulla and midbrain. Levels decrease slightly during weaning.

It is found in the mitochondrion matrix. The protein resides in the peroxisome. It carries out the reaction (3S)-3-hydroxy-3-methylglutaryl-CoA = acetoacetate + acetyl-CoA. Its pathway is metabolic intermediate metabolism; (S)-3-hydroxy-3-methylglutaryl-CoA degradation; acetoacetate from (S)-3-hydroxy-3-methylglutaryl-CoA: step 1/1. Mitochondrial 3-hydroxy-3-methylglutaryl-CoA lyase that catalyzes a cation-dependent cleavage of (S)-3-hydroxy-3-methylglutaryl-CoA into acetyl-CoA and acetoacetate, a key step in ketogenesis. Terminal step in leucine catabolism. Ketone bodies (beta-hydroxybutyrate, acetoacetate and acetone) are essential as an alternative source of energy to glucose, as lipid precursors and as regulators of metabolism. The chain is Hydroxymethylglutaryl-CoA lyase, mitochondrial (Hmgcl) from Rattus norvegicus (Rat).